Reading from the N-terminus, the 488-residue chain is UDP-GalNAc:beta-1,3-N-acetylgalactosaminyltransferase 2 (488 aa).

The Cytoplasmic segment spans residues 1 to 2 (MR). Residues 3–23 (HLLLLFLCPCAIGVAFHLWLF) form a helical; Signal-anchor for type II membrane protein membrane-spanning segment. 3 N-linked (GlcNAc...) asparagine glycosylation sites follow: N24, N105, and N162. Topologically, residues 24–488 (NFSGLFTWFP…CGNPCACEDR (465 aa)) are lumenal.

It belongs to the glycosyltransferase 31 family.

The protein resides in the golgi apparatus membrane. Its subcellular location is the endoplasmic reticulum. It catalyses the reaction 3-O-(N-acetyl-beta-D-glucosaminyl-(1-&gt;4)-alpha-D-mannosyl)-L-threonyl-[protein] + UDP-N-acetyl-alpha-D-galactosamine = 3-O-[beta-D-GalNAc-(1-&gt;3)-beta-D-GlcNAc-(1-&gt;4)-alpha-D-Man]-L-Thr-[protein] + UDP + H(+). It participates in protein modification; protein glycosylation. Beta-1,3-N-acetylgalactosaminyltransferase that synthesizes a unique carbohydrate structure, GalNAc-beta-1-3GlcNAc, on N- and O-glycans. Has no galactose nor galactosaminyl transferase activity toward any acceptor substrate. Involved in alpha-dystroglycan (dag1) glycosylation. In Xenopus tropicalis (Western clawed frog), this protein is UDP-GalNAc:beta-1,3-N-acetylgalactosaminyltransferase 2 (b3galnt2).